We begin with the raw amino-acid sequence, 264 residues long: S-adenosylmethionine decarboxylase proenzyme (264 aa).

The Schiff-base intermediate with substrate; via pyruvic acid role is filled by serine 112. Serine 112 bears the Pyruvic acid (Ser); by autocatalysis mark. Histidine 117 serves as the catalytic Proton acceptor; for processing activity. The Proton donor; for catalytic activity role is filled by cysteine 140.

This sequence belongs to the prokaryotic AdoMetDC family. Type 2 subfamily. Heterooctamer of four alpha and four beta chains arranged as a tetramer of alpha/beta heterodimers. It depends on pyruvate as a cofactor. Is synthesized initially as an inactive proenzyme. Formation of the active enzyme involves a self-maturation process in which the active site pyruvoyl group is generated from an internal serine residue via an autocatalytic post-translational modification. Two non-identical subunits are generated from the proenzyme in this reaction, and the pyruvate is formed at the N-terminus of the alpha chain, which is derived from the carboxyl end of the proenzyme. The post-translation cleavage follows an unusual pathway, termed non-hydrolytic serinolysis, in which the side chain hydroxyl group of the serine supplies its oxygen atom to form the C-terminus of the beta chain, while the remainder of the serine residue undergoes an oxidative deamination to produce ammonia and the pyruvoyl group blocking the N-terminus of the alpha chain.

It carries out the reaction S-adenosyl-L-methionine + H(+) = S-adenosyl 3-(methylsulfanyl)propylamine + CO2. It functions in the pathway amine and polyamine biosynthesis; S-adenosylmethioninamine biosynthesis; S-adenosylmethioninamine from S-adenosyl-L-methionine: step 1/1. Catalyzes the decarboxylation of S-adenosylmethionine to S-adenosylmethioninamine (dcAdoMet), the propylamine donor required for the synthesis of the polyamines spermine and spermidine from the diamine putrescine. This is S-adenosylmethionine decarboxylase proenzyme from Citrobacter koseri (strain ATCC BAA-895 / CDC 4225-83 / SGSC4696).